A 172-amino-acid chain; its full sequence is Adenine phosphoribosyltransferase (172 aa).

Belongs to the purine/pyrimidine phosphoribosyltransferase family. As to quaternary structure, homodimer.

Its subcellular location is the cytoplasm. It carries out the reaction AMP + diphosphate = 5-phospho-alpha-D-ribose 1-diphosphate + adenine. It participates in purine metabolism; AMP biosynthesis via salvage pathway; AMP from adenine: step 1/1. Catalyzes a salvage reaction resulting in the formation of AMP, that is energically less costly than de novo synthesis. The polypeptide is Adenine phosphoribosyltransferase (Prochlorococcus marinus (strain MIT 9215)).